Consider the following 128-residue polypeptide: Ribonuclease pancreatic B (128 aa).

The interval 1 to 21 is disordered; it reads AESSAMKFQRQHMDPEGSPSN. Positions 7 and 10 each coordinate substrate. The active-site Proton acceptor is the His12. Residues Asn21 and Asn34 are each glycosylated (N-linked (GlcNAc...) asparagine). 4 disulfides stabilise this stretch: Cys26-Cys84, Cys40-Cys95, Cys58-Cys110, and Cys65-Cys72. Residues 41–45, Lys66, and Arg85 each bind substrate; that span reads KPVNT. Residue His119 is the Proton donor of the active site.

This sequence belongs to the pancreatic ribonuclease family. Pancreas.

The protein localises to the secreted. It catalyses the reaction an [RNA] containing cytidine + H2O = an [RNA]-3'-cytidine-3'-phosphate + a 5'-hydroxy-ribonucleotide-3'-[RNA].. The catalysed reaction is an [RNA] containing uridine + H2O = an [RNA]-3'-uridine-3'-phosphate + a 5'-hydroxy-ribonucleotide-3'-[RNA].. This chain is Ribonuclease pancreatic B, found in Cavia porcellus (Guinea pig).